A 208-amino-acid chain; its full sequence is Holliday junction resolvase RecU (208 aa).

The tract at residues Met1 to Gly30 is disordered. Thr87, Asp89, Glu102, and Gln121 together coordinate Mg(2+).

It belongs to the RecU family. The cofactor is Mg(2+).

Its subcellular location is the cytoplasm. The catalysed reaction is Endonucleolytic cleavage at a junction such as a reciprocal single-stranded crossover between two homologous DNA duplexes (Holliday junction).. In terms of biological role, endonuclease that resolves Holliday junction intermediates in genetic recombination. Cleaves mobile four-strand junctions by introducing symmetrical nicks in paired strands. Promotes annealing of linear ssDNA with homologous dsDNA. Required for DNA repair, homologous recombination and chromosome segregation. This Staphylococcus saprophyticus subsp. saprophyticus (strain ATCC 15305 / DSM 20229 / NCIMB 8711 / NCTC 7292 / S-41) protein is Holliday junction resolvase RecU.